Reading from the N-terminus, the 89-residue chain is Small ribosomal subunit protein uS14A (89 aa).

Belongs to the universal ribosomal protein uS14 family. Part of the 30S ribosomal subunit. Contacts proteins S3 and S10.

In terms of biological role, binds 16S rRNA, required for the assembly of 30S particles and may also be responsible for determining the conformation of the 16S rRNA at the A site. The protein is Small ribosomal subunit protein uS14A of Staphylococcus haemolyticus (strain JCSC1435).